Reading from the N-terminus, the 504-residue chain is Anaerobic nitric oxide reductase transcription regulator NorR (504 aa).

At Asp57 the chain carries 4-aspartylphosphate. A Sigma-54 factor interaction domain is found at 187–416 (MIGLSPGMTQ…LEHAIHRAVV (230 aa)). ATP-binding positions include 215-222 (GETGTGKE) and 278-287 (ADNGTLFLDE). Residues 479–498 (WAACARMLETDVANLHRLAK) constitute a DNA-binding region (H-T-H motif).

The protein operates within nitrogen metabolism; nitric oxide reduction. Functionally, required for the expression of anaerobic nitric oxide (NO) reductase, acts as a transcriptional activator for at least the norVW operon. Activation also requires sigma-54. The sequence is that of Anaerobic nitric oxide reductase transcription regulator NorR from Escherichia coli O139:H28 (strain E24377A / ETEC).